A 104-amino-acid polypeptide reads, in one-letter code: Pterin-4-alpha-carbinolamine dehydratase (104 aa).

Alanine 2 carries the N-acetylalanine modification. Substrate-binding positions include 61 to 63 (DHH) and 78 to 81 (STHE).

The protein belongs to the pterin-4-alpha-carbinolamine dehydratase family. Homotetramer and homodimer. As to expression, the major tissues expressing cDcoH are hypothalamus, kidney and liver.

It localises to the cytoplasm. The protein resides in the nucleus. It carries out the reaction (4aS,6R)-4a-hydroxy-L-erythro-5,6,7,8-tetrahydrobiopterin = (6R)-L-erythro-6,7-dihydrobiopterin + H2O. Involved in tetrahydrobiopterin biosynthesis. Seems to both prevent the formation of 7-pterins and accelerate the formation of quinonoid-BH2. Coactivator for HNF1A-dependent transcription. Regulates the dimerization of homeodomain protein HNF1A and enhances its transcriptional activity. Also acts as a coactivator for HNF1B-dependent transcription. The polypeptide is Pterin-4-alpha-carbinolamine dehydratase (PCBD1) (Gallus gallus (Chicken)).